We begin with the raw amino-acid sequence, 400 residues long: Formate-dependent phosphoribosylglycinamide formyltransferase (400 aa).

Residues 22–23 (EL) and E82 each bind N(1)-(5-phospho-beta-D-ribosyl)glycinamide. Residues R115, K157, 162-167 (SSGKGQ), 197-200 (EGFV), and E205 contribute to the ATP site. An ATP-grasp domain is found at 120–315 (RLAAETLGLP…EFELHARAIL (196 aa)). E274 and E286 together coordinate Mg(2+). N(1)-(5-phospho-beta-D-ribosyl)glycinamide is bound by residues D293, K362, and 369–370 (RR).

The protein belongs to the PurK/PurT family. As to quaternary structure, homodimer.

The catalysed reaction is N(1)-(5-phospho-beta-D-ribosyl)glycinamide + formate + ATP = N(2)-formyl-N(1)-(5-phospho-beta-D-ribosyl)glycinamide + ADP + phosphate + H(+). It participates in purine metabolism; IMP biosynthesis via de novo pathway; N(2)-formyl-N(1)-(5-phospho-D-ribosyl)glycinamide from N(1)-(5-phospho-D-ribosyl)glycinamide (formate route): step 1/1. In terms of biological role, involved in the de novo purine biosynthesis. Catalyzes the transfer of formate to 5-phospho-ribosyl-glycinamide (GAR), producing 5-phospho-ribosyl-N-formylglycinamide (FGAR). Formate is provided by PurU via hydrolysis of 10-formyl-tetrahydrofolate. The protein is Formate-dependent phosphoribosylglycinamide formyltransferase of Mycolicibacterium vanbaalenii (strain DSM 7251 / JCM 13017 / BCRC 16820 / KCTC 9966 / NRRL B-24157 / PYR-1) (Mycobacterium vanbaalenii).